A 262-amino-acid polypeptide reads, in one-letter code: Dihydroorotate dehydrogenase B (NAD(+)), electron transfer subunit (262 aa).

An FAD-binding FR-type domain is found at 2–102 (SKVFDAKVLA…MGPLGRGFTL (101 aa)). FAD contacts are provided by residues 53-56 (RPIS), 70-72 (LFR), and 77-78 (GT). Positions 224, 229, 232, and 248 each coordinate [2Fe-2S] cluster.

This sequence belongs to the PyrK family. Heterotetramer of 2 PyrK and 2 PyrD type B subunits. However, the metal reductase complex seems to be composed of a heterooctamer of 4 PyrK and 4 PyrD subunits. FAD is required as a cofactor. [2Fe-2S] cluster serves as cofactor.

Its subcellular location is the cytoplasm. It participates in pyrimidine metabolism; UMP biosynthesis via de novo pathway; orotate from (S)-dihydroorotate (NAD(+) route): step 1/1. Its function is as follows. Responsible for channeling the electrons from the oxidation of dihydroorotate from the FMN redox center in the PyrD type B subunit to the ultimate electron acceptor NAD(+). In terms of biological role, together with PyrD, also forms a metal reductase complex able to reduce Fe(III)-chelates to Fe(II)-chelates, as well as soluble Cr(VI) and U(VI), using NADH as electron donor. To a lesser extent, can also use NADPH as an electron donor. Is unable to reduce riboflavin and FMN with NADH as electron donor. May have an in vivo role in metal reduction in D.reducens, which is an organism capable of reducing contaminant heavy metals and radionuclides. In Desulforamulus reducens (strain ATCC BAA-1160 / DSM 100696 / MI-1) (Desulfotomaculum reducens), this protein is Dihydroorotate dehydrogenase B (NAD(+)), electron transfer subunit.